A 464-amino-acid polypeptide reads, in one-letter code: PH domain-containing rcdII (464 aa).

The stretch at K8 to I210 forms a coiled coil. 2 disordered regions span residues N215–G290 and C317–N347. Low complexity-rich tracts occupy residues S234 to S288, C317 to S328, and R338 to N347. One can recognise a PH domain in the interval K353 to P461.

This chain is PH domain-containing rcdII (rcdII), found in Dictyostelium discoideum (Social amoeba).